The chain runs to 232 residues: Ras-related protein RabP (232 aa).

Residue 15–22 (GNYGVGKS) participates in GTP binding. The short motif at 35-40 (DNTTGF) is the Effector region element. GTP-binding positions include 58–62 (DTSGQ) and 118–121 (NKFD). S-geranylgeranyl cysteine attachment occurs at residues Cys229 and Cys230.

Belongs to the small GTPase superfamily. Rab family.

The protein resides in the cell membrane. In Dictyostelium discoideum (Social amoeba), this protein is Ras-related protein RabP (rabP).